Here is a 986-residue protein sequence, read N- to C-terminus: Replication factor C subunit 1 (986 aa).

Positions 1–95 (MQRGIDSFFK…ALSKLKRHVD (95 aa)) are disordered. Phosphoserine is present on residues S18, S28, S40, S41, S48, and S58. T60 is subject to Phosphothreonine. 2 positions are modified to phosphoserine: S62 and S63. At T71 the chain carries Phosphothreonine. Phosphoserine is present on residues S128, S137, S149, S154, S156, S164, and S194. Residues 136–147 (ESIKEAAPEKKV) are compositionally biased toward basic and acidic residues. 2 disordered regions span residues 136–203 (ESIK…ERHE) and 317–388 (KQVK…NDVP). Phosphothreonine is present on T197. Residues 232 to 322 (GSPDCLSGLT…SGIAKQVKEE (91 aa)) enclose the BRCT domain. Composition is skewed to basic and acidic residues over residues 317–364 (KQVK…EKHD) and 370–385 (VKEEHTSPKETKDKLN). Residue 487–494 (GPPGIGKT) coordinates ATP. The tract at residues 913–986 (SEAAGADDDY…ASKSKAKAKK (74 aa)) is disordered. The span at 917–932 (GADDDYLDEGPGEEDG) shows a compositional bias: acidic residues. A phosphoserine mark is found at S938 and S939. The Nuclear localization signal signature appears at 955-959 (KAKKR). Residues 962–979 (TSKASGGSKKATSSTASK) are compositionally biased toward low complexity.

Belongs to the activator 1 large subunit family. In terms of assembly, interacts with C-terminus of PCNA.

The protein localises to the nucleus. The elongation of primed DNA templates by DNA polymerase delta and epsilon requires the action of the accessory proteins proliferating cell nuclear antigen (PCNA) and activator 1. This subunit binds to the primer-template junction. The chain is Replication factor C subunit 1 (Gnf1) from Drosophila melanogaster (Fruit fly).